The chain runs to 269 residues: Imidazoleglycerol-phosphate dehydratase 2, chloroplastic (269 aa).

The N-terminal 51 residues, 1–51, are a transit peptide targeting the chloroplast; sequence MTTAPFLFPSLSRLHSARASSFPKPPVGSGAGVAFPARPYGSSLRLRSSVM. Residues Glu83, 109 to 117, 135 to 139, Arg161, and Arg183 each bind substrate; these read HMLDQLASH and HHSNE. The Mn(2+) site is built by His109, His135, His136, and Glu139. The Mn(2+) site is built by His207, His231, His232, and Glu235. Residues 231–239 and 261–263 each bind substrate; these read HHIIEATFK and SSK.

This sequence belongs to the imidazoleglycerol-phosphate dehydratase family. The cofactor is Mn(2+).

It is found in the plastid. It localises to the chloroplast. The enzyme catalyses D-erythro-1-(imidazol-4-yl)glycerol 3-phosphate = 3-(imidazol-4-yl)-2-oxopropyl phosphate + H2O. It participates in amino-acid biosynthesis; L-histidine biosynthesis; L-histidine from 5-phospho-alpha-D-ribose 1-diphosphate: step 6/9. In Triticum aestivum (Wheat), this protein is Imidazoleglycerol-phosphate dehydratase 2, chloroplastic.